A 160-amino-acid chain; its full sequence is MSILKKPDLNDPELRAKLAKGMGHNYYGEPAWPNDLLYIFPVVILGSIACCGGLAVLDPALIGEPADPFSTPLEILPEWYFFPVFQILRVIPNKLLGVVLMAAVPAGLIAVPFIENVNKFQNPFRRPVASAVFLFGTFVAIWLGIGATFPIDKSLTLGLF.

The next 3 helical transmembrane spans lie at 36–56 (LLYI…GLAV), 95–115 (LLGV…PFIE), and 131–151 (AVFL…TFPI).

This sequence belongs to the cytochrome b family. PetD subfamily. The 4 large subunits of the cytochrome b6-f complex are cytochrome b6, subunit IV (17 kDa polypeptide, petD), cytochrome f and the Rieske protein, while the 4 small subunits are petG, petL, petM and petN. The complex functions as a dimer.

Its subcellular location is the plastid. It localises to the cyanelle thylakoid membrane. Component of the cytochrome b6-f complex, which mediates electron transfer between photosystem II (PSII) and photosystem I (PSI), cyclic electron flow around PSI, and state transitions. This Cyanophora paradoxa protein is Cytochrome b6-f complex subunit 4.